The sequence spans 212 residues: NAD(P)H-quinone oxidoreductase subunit K, chloroplastic (212 aa).

[4Fe-4S] cluster-binding residues include Cys-43, Cys-44, Cys-108, and Cys-139.

Belongs to the complex I 20 kDa subunit family. As to quaternary structure, NDH is composed of at least 16 different subunits, 5 of which are encoded in the nucleus. The cofactor is [4Fe-4S] cluster.

The protein resides in the plastid. Its subcellular location is the chloroplast thylakoid membrane. It catalyses the reaction a plastoquinone + NADH + (n+1) H(+)(in) = a plastoquinol + NAD(+) + n H(+)(out). The enzyme catalyses a plastoquinone + NADPH + (n+1) H(+)(in) = a plastoquinol + NADP(+) + n H(+)(out). In terms of biological role, NDH shuttles electrons from NAD(P)H:plastoquinone, via FMN and iron-sulfur (Fe-S) centers, to quinones in the photosynthetic chain and possibly in a chloroplast respiratory chain. The immediate electron acceptor for the enzyme in this species is believed to be plastoquinone. Couples the redox reaction to proton translocation, and thus conserves the redox energy in a proton gradient. The sequence is that of NAD(P)H-quinone oxidoreductase subunit K, chloroplastic from Phaseolus vulgaris (Kidney bean).